The sequence spans 883 residues: Aryl hydrocarbon receptor (883 aa).

The propeptide occupies 1 to 9 (MSSGANITY). The tract at residues 1 to 38 (MSSGANITYASRKRRKPVQKTVKPIPAEGIKSNPSKRH) is disordered. 2 consecutive short sequence motifs (nuclear localization signal) follow at residues 12 to 15 (RKRR) and 36 to 41 (KRHRDR). The region spanning 26–79 (PAEGIKSNPSKRHRDRLNTELDRLASLLPFPQDVINKLDKLSVLRLSVSYLRAK) is the bHLH domain. The DNA-binding stretch occupies residues 37 to 65 (RHRDRLNTELDRLASLLPFPQDVINKLDK). Required for maintaining the overall integrity of the AHR:ARNT heterodimer and its transcriptional activity regions lie at residues 49–81 (LASL…AKSF), 116–124 (LLQALNGFV), and 260–262 (FAI). The Nuclear export signal signature appears at 63-71 (LDKLSVLRL). Positions 111–175 (QEGEFLLQAL…AEFQRQLHWA (65 aa)) constitute a PAS 1 domain. Residues 266 to 336 (LQPPSILEIR…CAESHIRMIK (71 aa)) enclose the PAS 2 domain. The 42-residue stretch at 342 to 383 (MTVFRLLAKHSRWRWVQSNARLIYRNGRPDYIIATQRPLTDE) folds into the PAC domain. The disordered stretch occupies residues 421 to 449 (LPIRTKSNTSRKDWAPQSTPSKDSFHPSS). Polar residues predominate over residues 436 to 449 (PQSTPSKDSFHPSS).

As to quaternary structure, homodimer. Heterodimer; efficient DNA binding requires dimerization with another bHLH protein. Interacts with ARNT; the heterodimer ARNT:AHR binds to core DNA sequence 5'-TGCGTG-3' within the dioxin response element (DRE) of target gene promoters and activates their transcription. Binds MYBBP1A. Interacts with coactivators including SRC-1, RIP140 and NOCA7, and with the corepressor SMRT. Interacts with NEDD8 and IVNS1ABP. Interacts with BMAL1. Interacts with HSP90AB1. Interacts with TIPARP; leading to mono-ADP-ribosylation of AHR and subsequent inhibition of AHR. Mono-ADP-ribosylated, leading to inhibit transcription activator activity of AHR.

The protein localises to the cytoplasm. Its subcellular location is the nucleus. In terms of biological role, ligand-activated transcription factor that enables cells to adapt to changing conditions by sensing compounds from the environment, diet, microbiome and cellular metabolism, and which plays important roles in development, immunity and cancer. Upon ligand binding, translocates into the nucleus, where it heterodimerizes with ARNT and induces transcription by binding to xenobiotic response elements (XRE). Regulates a variety of biological processes, including angiogenesis, hematopoiesis, drug and lipid metabolism, cell motility and immune modulation. Xenobiotics can act as ligands: upon xenobiotic-binding, activates the expression of multiple phase I and II xenobiotic chemical metabolizing enzyme genes (such as the CYP1A1 gene). Mediates biochemical and toxic effects of halogenated aromatic hydrocarbons. Next to xenobiotics, natural ligands derived from plants, microbiota, and endogenous metabolism are potent AHR agonists. Tryptophan (Trp) derivatives constitute an important class of endogenous AHR ligands. Acts as a negative regulator of anti-tumor immunity: indoles and kynurenic acid generated by Trp catabolism act as ligand and activate AHR, thereby promoting AHR-driven cancer cell motility and suppressing adaptive immunity. Regulates the circadian clock by inhibiting the basal and circadian expression of the core circadian component PER1. Inhibits PER1 by repressing the CLOCK-BMAL1 heterodimer mediated transcriptional activation of PER1. The heterodimer ARNT:AHR binds to core DNA sequence 5'-TGCGTG-3' within the dioxin response element (DRE) of target gene promoters and activates their transcription. The chain is Aryl hydrocarbon receptor (Ahr) from Mus musculus molossinus (Japanese house mouse).